A 341-amino-acid polypeptide reads, in one-letter code: L-threonine 3-dehydrogenase (341 aa).

Residue cysteine 38 participates in Zn(2+) binding. Residues threonine 40 and histidine 43 each act as charge relay system in the active site. Residues histidine 63, glutamate 64, cysteine 93, cysteine 96, cysteine 99, and cysteine 107 each contribute to the Zn(2+) site. NAD(+) is bound by residues isoleucine 175, aspartate 195, arginine 200, 262-264, and 286-287; these read LGI and IY.

Belongs to the zinc-containing alcohol dehydrogenase family. Homotetramer. Zn(2+) serves as cofactor.

The protein localises to the cytoplasm. It carries out the reaction L-threonine + NAD(+) = (2S)-2-amino-3-oxobutanoate + NADH + H(+). The protein operates within amino-acid degradation; L-threonine degradation via oxydo-reductase pathway; glycine from L-threonine: step 1/2. Functionally, catalyzes the NAD(+)-dependent oxidation of L-threonine to 2-amino-3-ketobutyrate. The chain is L-threonine 3-dehydrogenase from Yersinia pestis bv. Antiqua (strain Antiqua).